The chain runs to 303 residues: uncharacterized protein (303 aa).

Positions 1–24 are cleaved as a signal peptide; sequence MNRIALVFLYSLFLFNLAIGRVES. Asparagine 116 is a glycosylation site (N-linked (GlcNAc...) asparagine). Residues 124–179 are disordered; it reads FTRQQQKKSHDDDDDDDDSDSDESKEEEEKKKRDRKHRRDKRQAITQGSQNNTDPN. Over residues 135–149 the composition is skewed to acidic residues; it reads DDDDDDDSDSDESKE. Basic residues predominate over residues 155–164; the sequence is KRDRKHRRDK. A compositionally biased stretch (polar residues) spans 167 to 178; it reads AITQGSQNNTDP.

This is an uncharacterized protein from Caenorhabditis elegans.